The following is a 277-amino-acid chain: Phosphatidylglycerol--prolipoprotein diacylglyceryl transferase (277 aa).

The next 4 helical transmembrane spans lie at Ile18–Ala38, Ile51–Tyr71, Ile89–Ile109, and Ile116–Gly136. Arg137 serves as a coordination point for a 1,2-diacyl-sn-glycero-3-phospho-(1'-sn-glycerol). 3 helical membrane-spanning segments follow: residues Gln177–Ile197, Gly205–Met225, and Phe235–Tyr255.

It belongs to the Lgt family.

The protein localises to the cell membrane. The enzyme catalyses L-cysteinyl-[prolipoprotein] + a 1,2-diacyl-sn-glycero-3-phospho-(1'-sn-glycerol) = an S-1,2-diacyl-sn-glyceryl-L-cysteinyl-[prolipoprotein] + sn-glycerol 1-phosphate + H(+). Its pathway is protein modification; lipoprotein biosynthesis (diacylglyceryl transfer). In terms of biological role, catalyzes the transfer of the diacylglyceryl group from phosphatidylglycerol to the sulfhydryl group of the N-terminal cysteine of a prolipoprotein, the first step in the formation of mature lipoproteins. The polypeptide is Phosphatidylglycerol--prolipoprotein diacylglyceryl transferase (Listeria monocytogenes serovar 1/2a (strain ATCC BAA-679 / EGD-e)).